A 236-amino-acid polypeptide reads, in one-letter code: Small ribosomal subunit protein eS6 (236 aa).

Phosphoserine is present on residues Ser-232 and Ser-233.

The protein belongs to the eukaryotic ribosomal protein eS6 family. In terms of processing, phosphorylated.

The sequence is that of Small ribosomal subunit protein eS6 (RPS6) from Eremothecium gossypii (strain ATCC 10895 / CBS 109.51 / FGSC 9923 / NRRL Y-1056) (Yeast).